The primary structure comprises 223 residues: Putative endonuclease segD (223 aa).

In terms of domain architecture, GIY-YIG spans 4-87 (MKYLIYQITN…FVMRTDTYNA (84 aa)).

To endonucleases of group I introns of fungi and phage. The cofactor is Mg(2+).

Probably involved in the movement of the endonuclease-encoding DNA. The protein is Putative endonuclease segD (segD) of Enterobacteria phage T4 (Bacteriophage T4).